Consider the following 183-residue polypeptide: Capsid protein (183 aa).

The disordered stretch occupies residues 136-183 (NAPILSTLPETTVVRRRGRSPRRRTPSPRRRRSQSPRRRRSQSPASQC). Residues 149–176 (VRRRGRSPRRRTPSPRRRRSQSPRRRRS) show a composition bias toward basic residues. Residues serine 155, serine 162, and serine 170 each carry the phosphoserine; by host modification. The 1; half-length repeat unit spans residues 155–161 (SPRRRTP). A 3 X 8 AA repeats of S-P-R-R-R-[PR]-S-Q region spans residues 155–177 (SPRRRTPSPRRRRSQSPRRRRSQ). The Bipartite nuclear localization signal signature appears at 158-175 (RRTPSPRRRRSQSPRRRR). 2 tandem repeats follow at residues 162 to 169 (SPRRRRSQ) and 170 to 177 (SPRRRRSQ). The segment at 177–183 (QSPASQC) is RNA binding.

It belongs to the orthohepadnavirus core antigen family. In terms of assembly, homodimerizes, then multimerizes. Interacts with cytosol exposed regions of viral L glycoprotein present in the reticulum-to-Golgi compartment. Interacts with human FLNB. Phosphorylated form interacts with host importin alpha; this interaction depends on the exposure of the NLS, which itself depends upon genome maturation and/or phosphorylation of the capsid protein. Interacts with host NUP153. Post-translationally, phosphorylated by host SRPK1, SRPK2, and maybe protein kinase C or GAPDH. Phosphorylation is critical for pregenomic RNA packaging. Protein kinase C phosphorylation is stimulated by HBx protein and may play a role in transport of the viral genome to the nucleus at the late step during the viral replication cycle.

It localises to the virion. Its subcellular location is the host cytoplasm. Self assembles to form an icosahedral capsid. Most capsids appear to be large particles with an icosahedral symmetry of T=4 and consist of 240 copies of capsid protein, though a fraction forms smaller T=3 particles consisting of 180 capsid proteins. Entering capsids are transported along microtubules to the nucleus. Phosphorylation of the capsid is thought to induce exposure of nuclear localization signal in the C-terminal portion of the capsid protein that allows binding to the nuclear pore complex via the importin (karyopherin-) alpha and beta. Capsids are imported in intact form through the nuclear pore into the nuclear basket, where it probably binds NUP153. Only capsids that contain the mature viral genome can release the viral DNA and capsid protein into the nucleoplasm. Immature capsids get stuck in the basket. Capsids encapsulate the pre-genomic RNA and the P protein. Pre-genomic RNA is reverse-transcribed into DNA while the capsid is still in the cytoplasm. The capsid can then either be directed to the nucleus, providing more genomes for transcription, or bud through the endoplasmic reticulum to provide new virions. The sequence is that of Capsid protein from Homo sapiens (Human).